The primary structure comprises 202 residues: uncharacterized protein (202 aa).

The HTH tetR-type domain maps to 13–73 (ELAADRILDA…AYVHRETRRL (61 aa)). The H-T-H motif DNA-binding region spans 36–55 (GMNEIAKAAGCSRATLYRYF).

This is an uncharacterized protein from Mycobacterium tuberculosis (strain CDC 1551 / Oshkosh).